A 280-amino-acid chain; its full sequence is Tryptophan synthase alpha chain (280 aa).

Active-site proton acceptor residues include glutamate 49 and aspartate 60.

Belongs to the TrpA family. In terms of assembly, tetramer of two alpha and two beta chains.

It carries out the reaction (1S,2R)-1-C-(indol-3-yl)glycerol 3-phosphate + L-serine = D-glyceraldehyde 3-phosphate + L-tryptophan + H2O. It functions in the pathway amino-acid biosynthesis; L-tryptophan biosynthesis; L-tryptophan from chorismate: step 5/5. In terms of biological role, the alpha subunit is responsible for the aldol cleavage of indoleglycerol phosphate to indole and glyceraldehyde 3-phosphate. This is Tryptophan synthase alpha chain from Corynebacterium efficiens (strain DSM 44549 / YS-314 / AJ 12310 / JCM 11189 / NBRC 100395).